A 247-amino-acid polypeptide reads, in one-letter code: 5-oxoprolinase subunit A (247 aa).

This sequence belongs to the LamB/PxpA family. Forms a complex composed of PxpA, PxpB and PxpC.

The enzyme catalyses 5-oxo-L-proline + ATP + 2 H2O = L-glutamate + ADP + phosphate + H(+). Its function is as follows. Catalyzes the cleavage of 5-oxoproline to form L-glutamate coupled to the hydrolysis of ATP to ADP and inorganic phosphate. The sequence is that of 5-oxoprolinase subunit A from Klebsiella pneumoniae subsp. pneumoniae (strain ATCC 700721 / MGH 78578).